The primary structure comprises 429 residues: Adenylosuccinate synthetase (429 aa).

GTP contacts are provided by residues glycine 12 to lysine 18 and glycine 40 to threonine 42. The active-site Proton acceptor is aspartate 13. Mg(2+) is bound by residues aspartate 13 and glycine 40. IMP contacts are provided by residues aspartate 13–lysine 16, asparagine 38–histidine 41, threonine 128, arginine 142, glutamine 223, threonine 238, and arginine 302. Residue histidine 41 is the Proton donor of the active site. Substrate is bound at residue threonine 298 to arginine 304. GTP-binding positions include arginine 304, serine 330–aspartate 332, and serine 412–glycine 414.

It belongs to the adenylosuccinate synthetase family. As to quaternary structure, homodimer. Mg(2+) is required as a cofactor.

Its subcellular location is the cytoplasm. The catalysed reaction is IMP + L-aspartate + GTP = N(6)-(1,2-dicarboxyethyl)-AMP + GDP + phosphate + 2 H(+). Its pathway is purine metabolism; AMP biosynthesis via de novo pathway; AMP from IMP: step 1/2. Plays an important role in the de novo pathway of purine nucleotide biosynthesis. Catalyzes the first committed step in the biosynthesis of AMP from IMP. This chain is Adenylosuccinate synthetase, found in Bacillus cereus (strain ATCC 10987 / NRS 248).